The sequence spans 132 residues: Small ribosomal subunit protein uS8 (132 aa).

The protein belongs to the universal ribosomal protein uS8 family. In terms of assembly, part of the 30S ribosomal subunit. Contacts proteins S5 and S12.

One of the primary rRNA binding proteins, it binds directly to 16S rRNA central domain where it helps coordinate assembly of the platform of the 30S subunit. This is Small ribosomal subunit protein uS8 from Xylella fastidiosa (strain M23).